The primary structure comprises 406 residues: Tyrosine--tRNA ligase (406 aa).

Tyr35 lines the L-tyrosine pocket. A 'HIGH' region motif is present at residues 40-49; sequence ATSASLHIGH. 2 residues coordinate L-tyrosine: Tyr167 and Gln171. A 'KMSKS' region motif is present at residues 227-231; it reads KMGKS. Lys230 lines the ATP pocket. One can recognise an S4 RNA-binding domain in the interval 341-405; sequence ILLVDLMVLA…IGKKKILRIV (65 aa).

It belongs to the class-I aminoacyl-tRNA synthetase family. TyrS type 1 subfamily. In terms of assembly, homodimer.

The protein resides in the cytoplasm. It catalyses the reaction tRNA(Tyr) + L-tyrosine + ATP = L-tyrosyl-tRNA(Tyr) + AMP + diphosphate + H(+). In terms of biological role, catalyzes the attachment of tyrosine to tRNA(Tyr) in a two-step reaction: tyrosine is first activated by ATP to form Tyr-AMP and then transferred to the acceptor end of tRNA(Tyr). The chain is Tyrosine--tRNA ligase from Borrelia duttonii (strain Ly).